Consider the following 783-residue polypeptide: Protein SCARECROW (783 aa).

Residues 298–387 (QPQSQDAITH…QSPPASENTA (90 aa)) are disordered. Low complexity-rich tracts occupy residues 342–353 (PSSLPFVPVPSS) and 372–384 (ESQS…PASE). The stretch at 387-418 (AAAALIRTESIMRREKEELEQQKKDEEGLHLL) forms a coiled coil. The GRAS domain maps to 408-777 (QKKDEEGLHL…LCLLTASAWR (370 aa)). A leucine repeat I (LRI) region spans residues 415–478 (LHLLTLLLQC…LVNSCLGIYA (64 aa)). A LxCxE motif motif is present at residues 422–426 (LQCAE). The interval 497–562 (FQVFNGISPF…GGPPLVRLTG (66 aa)) is VHIID. The short motif at 528–532 (VHIID) is the VHIID element. A leucine repeat II (LRII) region spans residues 572 to 604 (ATGKRLSDFAQKLGLPFEFFPVADKVGNLDPQR). The tract at residues 613–700 (VAVHWLQHSL…QQLLSREIRN (88 aa)) is PFYRE. The tract at residues 703–777 (AVGGPSRSGE…LCLLTASAWR (75 aa)) is SAW.

It belongs to the GRAS family.

The protein resides in the nucleus. Putative transcription factor involved in asymmetric cell division. Required for differentiation of endodermis and graviresponses. This chain is Protein SCARECROW (SCR), found in Ipomoea nil (Japanese morning glory).